The sequence spans 351 residues: Transmembrane protein 255A (351 aa).

Transmembrane regions (helical) follow at residues 30 to 50 (IYVTVTLLIVSVLILTVGLAA), 57 to 77 (VTVGGYYPGVILGFGSFLGII), 89 to 109 (LVASIVFISFGVIAAFCCAIV), and 226 to 246 (TILNIVGLFLGIITAAVLGGF). Positions 302–331 (FPSSPPSGLSDEQEPQSPSPSPSYMWSSSA) are disordered.

It belongs to the TMEM255 family.

The protein localises to the membrane. The sequence is that of Transmembrane protein 255A (Tmem255a) from Rattus norvegicus (Rat).